Reading from the N-terminus, the 382-residue chain is S-adenosylmethionine synthase (382 aa).

Glu-10 is a Mg(2+) binding site. Residue His-16 coordinates ATP. A K(+)-binding site is contributed by Glu-44. Glu-57 and Gln-100 together coordinate L-methionine. ATP-binding positions include 166-168 (DTK), 234-237 (SGRF), Asp-245, 251-252 (RK), Ala-268, Lys-272, and Lys-276. Residue Asp-245 participates in L-methionine binding. Lys-276 is a binding site for L-methionine.

It belongs to the AdoMet synthase family. Mg(2+) is required as a cofactor. K(+) serves as cofactor.

The enzyme catalyses L-methionine + ATP + H2O = S-adenosyl-L-methionine + phosphate + diphosphate. It participates in amino-acid biosynthesis; S-adenosyl-L-methionine biosynthesis; S-adenosyl-L-methionine from L-methionine: step 1/1. Its function is as follows. Catalyzes the formation of S-adenosylmethionine from methionine and ATP. The reaction comprises two steps that are both catalyzed by the same enzyme: formation of S-adenosylmethionine (AdoMet) and triphosphate, and subsequent hydrolysis of the triphosphate. This is S-adenosylmethionine synthase (sam1) from Schizosaccharomyces pombe (strain 972 / ATCC 24843) (Fission yeast).